Here is a 448-residue protein sequence, read N- to C-terminus: MLDPILLRKDLQTVVSRLKTRGVDFDTQRFNELEARRKAVQTETESLQARRNALAKQIGQLKAQGQDASAVLAESQAIPARLKQLEDDLAVVQQSLGDLLMAVPNLPHESVPAGASADDNVEVRRWLPGPPAADGNPPPLPFEPKDHVALGEPLGLDFDTAAKLSGARFSFMRGPVARLHRALAQFMLDLQTGQHGYTECYTPYIVNSSTLYGTGQLPKFKDDMFFVTKGGEDDDPKVDERGNALAREDQYLISTSEITLTSVARDSIIPAANLPLRLTAHTPCFRSEAGSGGRDTRGMIRQHQFDKVEMVQIVHPETSYQVLEDMVGHAEHVLQLLELPYRVVLLCTGDMGFGSAKTYDLEVWLPAQNTWREISSVSNCETFQARRMQARFRAAQGKPDYVHTLNGSGLAVGRALVAVLENHQQADGSIAVPKVLQPYMGGLTVLQP.

An L-serine-binding site is contributed by 255-257; that stretch reads TSE. 286–288 is an ATP binding site; sequence RSE. Residue Glu309 coordinates L-serine. Residue 373 to 376 coordinates ATP; sequence EISS. Ser408 provides a ligand contact to L-serine.

The protein belongs to the class-II aminoacyl-tRNA synthetase family. Type-1 seryl-tRNA synthetase subfamily. In terms of assembly, homodimer. The tRNA molecule binds across the dimer.

The protein localises to the cytoplasm. It carries out the reaction tRNA(Ser) + L-serine + ATP = L-seryl-tRNA(Ser) + AMP + diphosphate + H(+). The enzyme catalyses tRNA(Sec) + L-serine + ATP = L-seryl-tRNA(Sec) + AMP + diphosphate + H(+). Its pathway is aminoacyl-tRNA biosynthesis; selenocysteinyl-tRNA(Sec) biosynthesis; L-seryl-tRNA(Sec) from L-serine and tRNA(Sec): step 1/1. Its function is as follows. Catalyzes the attachment of serine to tRNA(Ser). Is also able to aminoacylate tRNA(Sec) with serine, to form the misacylated tRNA L-seryl-tRNA(Sec), which will be further converted into selenocysteinyl-tRNA(Sec). The polypeptide is Serine--tRNA ligase (Bordetella petrii (strain ATCC BAA-461 / DSM 12804 / CCUG 43448)).